We begin with the raw amino-acid sequence, 298 residues long: Glycine--tRNA ligase alpha subunit (298 aa).

Belongs to the class-II aminoacyl-tRNA synthetase family. Tetramer of two alpha and two beta subunits.

The protein resides in the cytoplasm. The catalysed reaction is tRNA(Gly) + glycine + ATP = glycyl-tRNA(Gly) + AMP + diphosphate. In Helicobacter pylori (strain Shi470), this protein is Glycine--tRNA ligase alpha subunit.